The following is an 833-amino-acid chain: Leucine--tRNA ligase (833 aa).

The 'HIGH' region motif lies at 41-52 (PYPSGAGLHVGH). Residues 610-614 (KMSKS) carry the 'KMSKS' region motif. Lys613 contributes to the ATP binding site.

Belongs to the class-I aminoacyl-tRNA synthetase family.

Its subcellular location is the cytoplasm. It carries out the reaction tRNA(Leu) + L-leucine + ATP = L-leucyl-tRNA(Leu) + AMP + diphosphate. This chain is Leucine--tRNA ligase, found in Streptococcus pyogenes serotype M1.